The sequence spans 145 residues: Superoxide dismutase [Mn/Fe] (145 aa).

Positions 10 and 64 each coordinate Fe(3+). Residues H10 and H64 each coordinate Mn(2+).

This sequence belongs to the iron/manganese superoxide dismutase family. Mn(2+) serves as cofactor. The cofactor is Fe(3+).

It catalyses the reaction 2 superoxide + 2 H(+) = H2O2 + O2. Functionally, destroys superoxide anion radicals which are normally produced within the cells and which are toxic to biological systems. Catalyzes the dismutation of superoxide anion radicals into O2 and H2O2 by successive reduction and oxidation of the transition metal ion at the active site. The chain is Superoxide dismutase [Mn/Fe] (sodA) from Streptococcus alactolyticus.